Consider the following 457-residue polypeptide: Hepatocyte nuclear factor 3-beta (457 aa).

Positions 14 to 93 (DWSSYYAEPE…AGAMAGMGGS (80 aa)) are transactivation domain 1. The short motif at 106-113 (LSPSLSPL) is the Nuclear localization signal element. Residue Thr-156 is modified to Phosphothreonine. A DNA-binding region (fork-head) is located at residues 159–252 (KPPYSYISLI…FENGCYLRRQ (94 aa)). 2 positions are modified to phosphoserine: Ser-212 and Ser-283. Positions 280–292 (AQASQAQLGEAAG) are enriched in low complexity. Residues 280–365 (AQASQAQLGE…PGLPPEAHLK (86 aa)) are disordered. Positions 298-310 (PAGTESPHSSASP) are enriched in polar residues. At Thr-301 the chain carries Phosphothreonine. Residues Ser-303, Ser-306, Ser-307, and Ser-309 each carry the phosphoserine modification. A compositionally biased stretch (low complexity) spans 339 to 352 (PGQQQQAAAHLLGP). The interval 361–457 (EAHLKPEHHY…VYSRPIMNSS (97 aa)) is transactivation domain 2. Phosphoserine occurs at positions 436 and 457.

Binds DNA as a monomer. Binds TLE1. Interacts with FOXA1 and FOXA3. Interacts with PRKDC. Interacts with AKT1. Interacts with TET1; this interaction may recruit TET1 to specific genomic loci to mediate their demethylation. Phosphorylation on Thr-156 abolishes binding to target promoters and subsequent transcription activation upon insulin stimulation.

The protein resides in the nucleus. It localises to the cytoplasm. Transcription factor that is involved in embryonic development, establishment of tissue-specific gene expression and regulation of gene expression in differentiated tissues. Is thought to act as a 'pioneer' factor opening the compacted chromatin for other proteins through interactions with nucleosomal core histones and thereby replacing linker histones at target enhancer and/or promoter sites. Binds DNA with the consensus sequence 5'-[AC]A[AT]T[AG]TT[GT][AG][CT]T[CT]-3'. In embryonic development is required for notochord formation. Involved in the development of multiple endoderm-derived organ systems such as the liver, pancreas and lungs; FOXA1 and FOXA2 seem to have at least in part redundant roles. Originally described as a transcription activator for a number of liver genes such as AFP, albumin, tyrosine aminotransferase, PEPCK, etc. Interacts with the cis-acting regulatory regions of these genes. Involved in glucose homeostasis; regulates the expression of genes important for glucose sensing in pancreatic beta-cells and glucose homeostasis. Involved in regulation of fat metabolism. Binds to fibrinogen beta promoter and is involved in IL6-induced fibrinogen beta transcriptional activation. The polypeptide is Hepatocyte nuclear factor 3-beta (FOXA2) (Homo sapiens (Human)).